Here is a 161-residue protein sequence, read N- to C-terminus: Calmodulin-like protein (161 aa).

4 consecutive EF-hand domains span residues 21–56, 57–92, 93–128, and 129–161; these read EEID…LGQN, PTEQ…MMKE, TDSE…MGMQ, and FSEE…MSNQ. Residues Asp34, Asp36, Asn38, Thr40, Glu45, Asp70, Asp72, Asn74, Gln76, Glu81, Asp106, Asp108, Asn110, Glu117, Asp142, Asp144, Asp146, Glu148, and Glu153 each contribute to the Ca(2+) site.

This sequence belongs to the calmodulin family.

This protein resembles calmodulin in sequence but possibly resembles troponin C in function. The protein is Calmodulin-like protein (cal-1) of Caenorhabditis elegans.